The following is a 269-amino-acid chain: Hydroxyethylthiazole kinase (269 aa).

Position 41 (M41) interacts with substrate. Residues R117 and S165 each contribute to the ATP site. G192 lines the substrate pocket.

This sequence belongs to the Thz kinase family. It depends on Mg(2+) as a cofactor.

The catalysed reaction is 5-(2-hydroxyethyl)-4-methylthiazole + ATP = 4-methyl-5-(2-phosphooxyethyl)-thiazole + ADP + H(+). The protein operates within cofactor biosynthesis; thiamine diphosphate biosynthesis; 4-methyl-5-(2-phosphoethyl)-thiazole from 5-(2-hydroxyethyl)-4-methylthiazole: step 1/1. Functionally, catalyzes the phosphorylation of the hydroxyl group of 4-methyl-5-beta-hydroxyethylthiazole (THZ). The protein is Hydroxyethylthiazole kinase of Actinobacillus succinogenes (strain ATCC 55618 / DSM 22257 / CCUG 43843 / 130Z).